A 113-amino-acid chain; its full sequence is Ribosome-binding factor A (113 aa).

This sequence belongs to the RbfA family. In terms of assembly, monomer. Binds 30S ribosomal subunits, but not 50S ribosomal subunits or 70S ribosomes.

The protein resides in the cytoplasm. Functionally, one of several proteins that assist in the late maturation steps of the functional core of the 30S ribosomal subunit. Associates with free 30S ribosomal subunits (but not with 30S subunits that are part of 70S ribosomes or polysomes). Required for efficient processing of 16S rRNA. May interact with the 5'-terminal helix region of 16S rRNA. In Mycoplasmopsis agalactiae (strain NCTC 10123 / CIP 59.7 / PG2) (Mycoplasma agalactiae), this protein is Ribosome-binding factor A.